The sequence spans 280 residues: Probable 2-(5''-triphosphoribosyl)-3'-dephosphocoenzyme-A synthase (280 aa).

It belongs to the CitG/MdcB family.

It catalyses the reaction 3'-dephospho-CoA + ATP = 2'-(5''-triphospho-alpha-D-ribosyl)-3'-dephospho-CoA + adenine. The chain is Probable 2-(5''-triphosphoribosyl)-3'-dephosphocoenzyme-A synthase from Lactiplantibacillus plantarum (strain ATCC BAA-793 / NCIMB 8826 / WCFS1) (Lactobacillus plantarum).